Reading from the N-terminus, the 164-residue chain is Two-component response regulator ARR16 (164 aa).

A Response regulatory domain is found at His30–Met160. Asp93 is modified (4-aspartylphosphate).

Belongs to the ARR family. Type-A subfamily. In terms of processing, two-component system major event consists of a His-to-Asp phosphorelay between a sensor histidine kinase (HK) and a response regulator (RR). In plants, the His-to-Asp phosphorelay involves an additional intermediate named Histidine-containing phosphotransfer protein (HPt). This multistep phosphorelay consists of a His-Asp-His-Asp sequential transfer of a phosphate group between first a His and an Asp of the HK protein, followed by the transfer to a conserved His of the HPt protein and finally the transfer to an Asp in the receiver domain of the RR protein.

It localises to the nucleus. In terms of biological role, functions as a response regulator involved in His-to-Asp phosphorelay signal transduction system. Phosphorylation of the Asp residue in the receiver domain activates the ability of the protein to promote the transcription of target genes. Type-A response regulators seem to act as negative regulators of the cytokinin signaling. The chain is Two-component response regulator ARR16 (ARR16) from Arabidopsis thaliana (Mouse-ear cress).